The following is a 439-amino-acid chain: uncharacterized protein (439 aa).

The span at 268–284 (QQQQQQQPQHNNNNTQV) shows a compositional bias: low complexity. Residues 268 to 439 (QQQQQQQPQH…RTRFTTTNLH (172 aa)) form a disordered region. The segment covering 285 to 328 (QPPPPSQQLPPPPKPQPQLPKPQPQKPQPQLPKPPQQPKPPQEP) has biased composition (pro residues). The span at 350-439 (QEQQQQPPQE…RTRFTTTNLH (90 aa)) shows a compositional bias: low complexity.

This is an uncharacterized protein from Dictyostelium discoideum (Social amoeba).